The chain runs to 78 residues: RNA-binding protein Hfq (78 aa).

The region spanning 10-69 (DPFLNTLRKEHVPVSIYLVNGIKLQGQIESFDQYVVLLRNTVTQMVYKHAISTVVPARAV) is the Sm domain.

The protein belongs to the Hfq family. Homohexamer.

Functionally, RNA chaperone that binds small regulatory RNA (sRNAs) and mRNAs to facilitate mRNA translational regulation in response to envelope stress, environmental stress and changes in metabolite concentrations. Also binds with high specificity to tRNAs. The sequence is that of RNA-binding protein Hfq from Bordetella petrii (strain ATCC BAA-461 / DSM 12804 / CCUG 43448).